A 292-amino-acid polypeptide reads, in one-letter code: Small ribosomal subunit biogenesis GTPase RsgA (292 aa).

Residues 64–221 (RSELFRPAVA…LVDTPGFSSL (158 aa)) enclose the CP-type G domain. GTP is bound by residues 113 to 116 (NKMD) and 164 to 172 (GPSGVGKST). Zn(2+)-binding residues include C245, C250, H252, and C258.

It belongs to the TRAFAC class YlqF/YawG GTPase family. RsgA subfamily. As to quaternary structure, monomer. Associates with 30S ribosomal subunit, binds 16S rRNA. Zn(2+) serves as cofactor.

It localises to the cytoplasm. In terms of biological role, one of several proteins that assist in the late maturation steps of the functional core of the 30S ribosomal subunit. Helps release RbfA from mature subunits. May play a role in the assembly of ribosomal proteins into the subunit. Circularly permuted GTPase that catalyzes slow GTP hydrolysis, GTPase activity is stimulated by the 30S ribosomal subunit. In Clostridium botulinum (strain Kyoto / Type A2), this protein is Small ribosomal subunit biogenesis GTPase RsgA.